The sequence spans 125 residues: Small ribosomal subunit protein bS6 (125 aa).

Residues 96–125 form a disordered region; the sequence is VTEASPMKAAKEERKPLAEVENNDFEDAEE. Residues 104-113 show a composition bias toward basic and acidic residues; sequence AAKEERKPLA. A compositionally biased stretch (acidic residues) spans 116–125; the sequence is ENNDFEDAEE.

Belongs to the bacterial ribosomal protein bS6 family.

Binds together with bS18 to 16S ribosomal RNA. The polypeptide is Small ribosomal subunit protein bS6 (Haemophilus influenzae (strain 86-028NP)).